The sequence spans 547 residues: Chaperonin GroEL 2 (547 aa).

ATP contacts are provided by residues 30–33, Lys-51, 87–91, Gly-415, and Asp-496; these read TLGP and DGTTT.

The protein belongs to the chaperonin (HSP60) family. As to quaternary structure, forms a cylinder of 14 subunits composed of two heptameric rings stacked back-to-back. Interacts with the co-chaperonin GroES.

Its subcellular location is the cytoplasm. The enzyme catalyses ATP + H2O + a folded polypeptide = ADP + phosphate + an unfolded polypeptide.. Together with its co-chaperonin GroES, plays an essential role in assisting protein folding. The GroEL-GroES system forms a nano-cage that allows encapsulation of the non-native substrate proteins and provides a physical environment optimized to promote and accelerate protein folding. This Rhodopseudomonas palustris (strain ATCC BAA-98 / CGA009) protein is Chaperonin GroEL 2.